A 542-amino-acid chain; its full sequence is Chaperonin GroEL (542 aa).

ATP-binding positions include T29–P32, D86–T90, G413, N476–A478, and D492.

This sequence belongs to the chaperonin (HSP60) family. In terms of assembly, forms a cylinder of 14 subunits composed of two heptameric rings stacked back-to-back. Interacts with the co-chaperonin GroES.

It is found in the cytoplasm. It catalyses the reaction ATP + H2O + a folded polypeptide = ADP + phosphate + an unfolded polypeptide.. Together with its co-chaperonin GroES, plays an essential role in assisting protein folding. The GroEL-GroES system forms a nano-cage that allows encapsulation of the non-native substrate proteins and provides a physical environment optimized to promote and accelerate protein folding. The sequence is that of Chaperonin GroEL from Lactococcus lactis subsp. cremoris (strain MG1363).